Consider the following 138-residue polypeptide: Small ribosomal subunit protein uS11c (138 aa).

The interval 1 to 23 (MAKPILRIGSRKNTRSGSRKNVR) is disordered. Over residues 9–23 (GSRKNTRSGSRKNVR) the composition is skewed to basic residues.

The protein belongs to the universal ribosomal protein uS11 family. In terms of assembly, part of the 30S ribosomal subunit.

The protein resides in the plastid. It localises to the chloroplast. In Aethionema grandiflorum (Persian stone-cress), this protein is Small ribosomal subunit protein uS11c.